A 182-amino-acid polypeptide reads, in one-letter code: Ribosome-recycling factor (182 aa).

It belongs to the RRF family.

It is found in the cytoplasm. Its function is as follows. Responsible for the release of ribosomes from messenger RNA at the termination of protein biosynthesis. May increase the efficiency of translation by recycling ribosomes from one round of translation to another. The polypeptide is Ribosome-recycling factor (Synechocystis sp. (strain ATCC 27184 / PCC 6803 / Kazusa)).